The following is a 503-amino-acid chain: Efflux pump vrtL (503 aa).

The tract at residues 1–59 (MSKLSDNHSSASEGEKEAGDLESGPTAISSEPSFDDADRDPNLITWDGPKDPENPKNWP) is disordered. A glycan (N-linked (GlcNAc...) asparagine) is linked at asparagine 7. 12 helical membrane-spanning segments follow: residues 68–88 (WTVS…APAM), 101–121 (IEIY…PIFF), 133–153 (LLQI…FATT), 162–182 (FLAG…ISDM), 194–214 (VYTL…GFIA), 221–241 (WVFW…FFWL), 295–315 (IVFC…LMFA), 329–349 (PGIG…GLFF), 377–397 (SLAV…WSIG), 401–421 (WIMP…CLQG), 432–454 (TYAA…GFPL), and 471–491 (LLAF…WHFG).

The protein belongs to the major facilitator superfamily.

Its subcellular location is the membrane. Functionally, efflux pump; part of the gene cluster that mediates the biosynthesis of viridicatumtoxin, a tetracycline-like fungal meroterpenoid with a unique, fused spirobicyclic ring system. The chain is Efflux pump vrtL from Penicillium aethiopicum.